Consider the following 290-residue polypeptide: Pyridoxal kinase PdxY (290 aa).

Residues Ser-9 and 44 to 45 (TQ) each bind substrate. ATP-binding residues include Asp-112, Val-144, Glu-149, and Lys-182. Asp-221 lines the substrate pocket.

Belongs to the pyridoxine kinase family. PdxY subfamily. As to quaternary structure, homodimer. Requires Mg(2+) as cofactor.

The catalysed reaction is pyridoxal + ATP = pyridoxal 5'-phosphate + ADP + H(+). Its pathway is cofactor metabolism; pyridoxal 5'-phosphate salvage; pyridoxal 5'-phosphate from pyridoxal: step 1/1. In terms of biological role, pyridoxal kinase involved in the salvage pathway of pyridoxal 5'-phosphate (PLP). Catalyzes the phosphorylation of pyridoxal to PLP. The polypeptide is Pyridoxal kinase PdxY (Vibrio vulnificus (strain CMCP6)).